The chain runs to 68 residues: Neuronal regeneration-related protein (68 aa).

The segment at 22 to 54 is disordered; the sequence is EGRLPKGRLPVPKEVNRKKNDETNAASLTPLGS. A compositionally biased stretch (polar residues) spans 44–54; sequence TNAASLTPLGS. Serine 59 is subject to Phosphoserine.

In terms of assembly, interacts with the latency-associated peptides (LAP) of TGFB1 and TGFB2; the interaction results in a decrease in TGFB autoinduction. Interacts with FLNA. In terms of processing, phosphorylated on Ser-59. Phosphorylation decreases stability and activity. In terms of tissue distribution, expressed in lung (at protein level).

It localises to the cytoplasm. Its function is as follows. May have roles in neural function. Ectopic expression augments motility of gliomas. Also promotes axonal regeneration. May also have functions in cellular differentiation. Induces differentiation of fibroblast into myofibroblast and myofibroblast ameboid migration. Increases retinoic-acid regulation of lipid-droplet biogenesis. Down-regulates the expression of TGFB1 and TGFB2 but not of TGFB3. May play a role in the regulation of alveolar generation. The protein is Neuronal regeneration-related protein (NREP) of Homo sapiens (Human).